A 732-amino-acid chain; its full sequence is Aldehyde oxidoreductase molybdenum-binding subunit PaoC (732 aa).

Mo-molybdopterin cytosine dinucleotide contacts are provided by residues 241–242, 468–470, 511–512, 615–621, Gln-625, and 688–691; these read GF, IGT, GA, RILNPKT, and KGVG. Glu-692 (proton acceptor) is an active-site residue.

The protein belongs to the xanthine dehydrogenase family. Heterotrimer composed of PaoA, PaoB and PaoC. The cofactor is Mo-molybdopterin cytosine dinucleotide.

Its subcellular location is the periplasm. It carries out the reaction an aldehyde + A + H2O = a carboxylate + AH2 + H(+). In terms of biological role, oxidizes aldehydes to the corresponding carboxylic acids with a preference for aromatic aldehydes. It might play a role in the detoxification of aldehydes to avoid cell damage. In Escherichia coli O157:H7, this protein is Aldehyde oxidoreductase molybdenum-binding subunit PaoC.